Here is a 384-residue protein sequence, read N- to C-terminus: S-adenosylmethionine synthase (384 aa).

Residue His-15 coordinates ATP. Asp-17 is a Mg(2+) binding site. Glu-43 serves as a coordination point for K(+). L-methionine contacts are provided by Glu-56 and Gln-99. The interval 99-109 is flexible loop; it reads QSPDINQGVDR. Residues 164-166, 230-231, Asp-239, 245-246, Ala-262, and Lys-266 each bind ATP; these read DAK, RF, and RK. Residue Asp-239 coordinates L-methionine. Lys-270 is an L-methionine binding site.

The protein belongs to the AdoMet synthase family. Homotetramer; dimer of dimers. Mg(2+) serves as cofactor. K(+) is required as a cofactor.

The protein resides in the cytoplasm. It carries out the reaction L-methionine + ATP + H2O = S-adenosyl-L-methionine + phosphate + diphosphate. The protein operates within amino-acid biosynthesis; S-adenosyl-L-methionine biosynthesis; S-adenosyl-L-methionine from L-methionine: step 1/1. In terms of biological role, catalyzes the formation of S-adenosylmethionine (AdoMet) from methionine and ATP. The overall synthetic reaction is composed of two sequential steps, AdoMet formation and the subsequent tripolyphosphate hydrolysis which occurs prior to release of AdoMet from the enzyme. The sequence is that of S-adenosylmethionine synthase from Salmonella agona (strain SL483).